A 132-amino-acid polypeptide reads, in one-letter code: Cliotide T2 (132 aa).

The N-terminal stretch at 1-28 (MAYVRLTSLAVLFFLAASVMLNVKKTEG) is a signal peptide. A cross-link (cyclopeptide (Gly-Asn)) is located at residues 29–58 (GEFLKCGESCVQGECYTPGCSCDWPICKKN). 3 disulfide bridges follow: C34–C48, C38–C50, and C43–C55. Positions 59-132 (HIIATNAKTV…NLKMPMTIIN (74 aa)) are cleaved as a propeptide — removed in mature form.

Post-translationally, this is a cyclic peptide. Expressed in flower, stem, shoot and pod but not in root, leaf, seed and nodule (at protein level).

Functionally, probably participates in a plant defense mechanism. Not active against Gram-negative bacteria E.coli ATCC 700926, K.pneumoniae ATTC 13883 and P.aeruginosa ATCC 39018 at concentration up to 100 uM. Has cytotoxic but no hemolytic activity. This is Cliotide T2 from Clitoria ternatea (Butterfly pea).